The sequence spans 233 residues: 7-cyano-7-deazaguanine synthase (233 aa).

13–23 (LSGGLDSTTCL) is an ATP binding site. Zn(2+) is bound by residues cysteine 197, cysteine 206, cysteine 209, and cysteine 212.

It belongs to the QueC family. The cofactor is Zn(2+).

It carries out the reaction 7-carboxy-7-deazaguanine + NH4(+) + ATP = 7-cyano-7-deazaguanine + ADP + phosphate + H2O + H(+). The protein operates within purine metabolism; 7-cyano-7-deazaguanine biosynthesis. Its function is as follows. Catalyzes the ATP-dependent conversion of 7-carboxy-7-deazaguanine (CDG) to 7-cyano-7-deazaguanine (preQ(0)). In Anaeromyxobacter sp. (strain Fw109-5), this protein is 7-cyano-7-deazaguanine synthase.